Here is a 234-residue protein sequence, read N- to C-terminus: Phosphoribosylaminoimidazole-succinocarboxamide synthase (234 aa).

Belongs to the SAICAR synthetase family.

The catalysed reaction is 5-amino-1-(5-phospho-D-ribosyl)imidazole-4-carboxylate + L-aspartate + ATP = (2S)-2-[5-amino-1-(5-phospho-beta-D-ribosyl)imidazole-4-carboxamido]succinate + ADP + phosphate + 2 H(+). The protein operates within purine metabolism; IMP biosynthesis via de novo pathway; 5-amino-1-(5-phospho-D-ribosyl)imidazole-4-carboxamide from 5-amino-1-(5-phospho-D-ribosyl)imidazole-4-carboxylate: step 1/2. The sequence is that of Phosphoribosylaminoimidazole-succinocarboxamide synthase from Staphylococcus carnosus (strain TM300).